We begin with the raw amino-acid sequence, 239 residues long: Pyridoxine 5'-phosphate synthase (239 aa).

Asparagine 7 contributes to the 3-amino-2-oxopropyl phosphate binding site. 9-10 (DH) is a binding site for 1-deoxy-D-xylulose 5-phosphate. Arginine 18 contacts 3-amino-2-oxopropyl phosphate. The active-site Proton acceptor is the histidine 43. Arginine 45 and histidine 50 together coordinate 1-deoxy-D-xylulose 5-phosphate. Glutamate 70 functions as the Proton acceptor in the catalytic mechanism. 1-deoxy-D-xylulose 5-phosphate is bound at residue threonine 100. Histidine 192 acts as the Proton donor in catalysis. Residues glycine 193 and 214–215 (GH) each bind 3-amino-2-oxopropyl phosphate.

Belongs to the PNP synthase family. Homooctamer; tetramer of dimers.

Its subcellular location is the cytoplasm. The enzyme catalyses 3-amino-2-oxopropyl phosphate + 1-deoxy-D-xylulose 5-phosphate = pyridoxine 5'-phosphate + phosphate + 2 H2O + H(+). Its pathway is cofactor biosynthesis; pyridoxine 5'-phosphate biosynthesis; pyridoxine 5'-phosphate from D-erythrose 4-phosphate: step 5/5. Functionally, catalyzes the complicated ring closure reaction between the two acyclic compounds 1-deoxy-D-xylulose-5-phosphate (DXP) and 3-amino-2-oxopropyl phosphate (1-amino-acetone-3-phosphate or AAP) to form pyridoxine 5'-phosphate (PNP) and inorganic phosphate. The protein is Pyridoxine 5'-phosphate synthase of Pelagibacter ubique (strain HTCC1062).